Here is a 376-residue protein sequence, read N- to C-terminus: MAKRDYYEVLGISKSASADEIKKAYRKLSKQYHPDINKEAGADEKFKEISEAYEALSDPQKRAQYDQYGHVDPNQGFGGGAGGGFGGGGFSGFEDIFDTFFGGGGRQQDPNAPRQGSDLQYTMRLKFKEAIFGKDAEIEIPREENCDTCHGSGAKPGTTPEKCSHCGGKGSINVEQNTPFGRVVNKRTCQYCNGTGKEIKEKCPTCHGKGRVTKTKKIKVKVPAGVNDGQQMRVSGEGEAGINGGPNGDLYVVFVVIPDEFFEREADDIYVEVPITFVQATLGDEIDVPTVHGKVRLKIPSGTQTGTTFRLRGKGVPHLRGNGTGDQHVIVKVIVPKKLDDKQKEILREFASTTGDKVDEQTSGFFDKMKRAFKGD.

In terms of domain architecture, J spans 5-69 (DYYEVLGISK…QKRAQYDQYG (65 aa)). The segment at 133–215 (GKDAEIEIPR…CHGKGRVTKT (83 aa)) adopts a CR-type zinc-finger fold. Zn(2+) is bound by residues cysteine 146, cysteine 149, cysteine 163, cysteine 166, cysteine 189, cysteine 192, cysteine 203, and cysteine 206. CXXCXGXG motif repeat units lie at residues 146 to 153 (CDTCHGSG), 163 to 170 (CSHCGGKG), 189 to 196 (CQYCNGTG), and 203 to 210 (CPTCHGKG).

It belongs to the DnaJ family. In terms of assembly, homodimer. It depends on Zn(2+) as a cofactor.

It localises to the cytoplasm. Participates actively in the response to hyperosmotic and heat shock by preventing the aggregation of stress-denatured proteins and by disaggregating proteins, also in an autonomous, DnaK-independent fashion. Unfolded proteins bind initially to DnaJ; upon interaction with the DnaJ-bound protein, DnaK hydrolyzes its bound ATP, resulting in the formation of a stable complex. GrpE releases ADP from DnaK; ATP binding to DnaK triggers the release of the substrate protein, thus completing the reaction cycle. Several rounds of ATP-dependent interactions between DnaJ, DnaK and GrpE are required for fully efficient folding. Also involved, together with DnaK and GrpE, in the DNA replication of plasmids through activation of initiation proteins. The polypeptide is Chaperone protein DnaJ (Listeria monocytogenes serotype 4a (strain HCC23)).